We begin with the raw amino-acid sequence, 287 residues long: MEGIFYALIPMFTWGSIGFVSNKIGGKPSQQTLGMTFGALLFSLAVWLIVRPEMTLQLWLFGILGGFIWSIGQTGQFHAMQYMGVSVANPLSSGSQLVLGSLIGVLVFHEWTRPMQFVVGSLALLLLIIGFYFSSKQDDANAQVNHLHNFSKGFRALTYSTIGYVMYAVLFNNIMKFEVLSVILPMAVGMVLGAITFMSFKISIDQYVIKNSVVGLLWGIGNIFMLLAASKAGLAIAFSFSQLGAIISIVGGILFLGETKTKKEMRWVVTGIICFIVGAILLGVVKS.

The next 10 helical transmembrane spans lie at 4–26 (IFYALIPMFTWGSIGFVSNKIGG), 33–50 (LGMTFGALLFSLAVWLIV), 55–72 (TLQLWLFGILGGFIWSIG), 85–107 (VSVANPLSSGSQLVLGSLIGVLV), 117–134 (FVVGSLALLLLIIGFYFS), 154–171 (FRALTYSTIGYVMYAVLF), 181–200 (SVILPMAVGMVLGAITFMSF), 207–229 (YVIKNSVVGLLWGIGNIFMLLAA), 234–256 (LAIAFSFSQLGAIISIVGGILFL), and 268–285 (VVTGIICFIVGAILLGVV).

Belongs to the GRP transporter (TC 2.A.7.5) family.

It localises to the cell membrane. This Streptococcus pyogenes serotype M6 (strain ATCC BAA-946 / MGAS10394) protein is Putative sugar uptake protein M6_Spy1874.